Consider the following 293-residue polypeptide: Actin-related protein 2/3 complex subunit 2 (293 aa).

The protein belongs to the ARPC2 family. Component of the Arp2/3 complex composed of arpB/Arp2, arpC/Arp3, arcA/p41-arc, arcB/p34-arc, arcC/p21-arc, arcD/p20-arc and arcE/p16-arc. Interacts with carmil (via the region between the LRR domain and COOH-terminal proline-rich domain); carmil is required for Arp2/3-dependent actin nucleation. Arp2/3 complex, MyoB, MyoC, and the alpha and beta subunits of capping protein all form a larger complex with carmil.

It is found in the cytoplasm. The protein resides in the cytoskeleton. It localises to the cell projection. Its subcellular location is the cytosol. The protein localises to the cell cortex. It is found in the pseudopodium. Its function is as follows. Functions as a component of the Arp2/3 complex which is involved in regulation of actin polymerization and together with an activating nucleation-promoting factor (NPF) mediates the formation of branched actin networks. Seems to contact the pointed end of the daughter actin filament. The Arp2/3 complex is involved in organizing the actin system in cell motility and chemotaxis, in phagocytosis and macropinocytosis, at late steps of endosome processing, and in mitosis. In concert with a group of other proteins, the Arp2/3 complex plays a general role in the rapid activation and adaptation of the actin system to its multiple functions. The sequence is that of Actin-related protein 2/3 complex subunit 2 (arcB) from Dictyostelium discoideum (Social amoeba).